Here is a 559-residue protein sequence, read N- to C-terminus: Asparagine--tRNA ligase, cytoplasmic (559 aa).

At serine 72 the chain carries Phosphoserine. Lysine 255 and lysine 501 each carry N6-acetyllysine.

Belongs to the class-II aminoacyl-tRNA synthetase family.

The protein localises to the cytoplasm. The catalysed reaction is tRNA(Asn) + L-asparagine + ATP = L-asparaginyl-tRNA(Asn) + AMP + diphosphate + H(+). This is Asparagine--tRNA ligase, cytoplasmic (NARS) from Bos taurus (Bovine).